The chain runs to 760 residues: MPTFAQPVPDDIVASSGLRSKFRPHVHGNYQICVEPSKGMETFYNDAMSTQLESKTLADIPGLGLVHPMALAMANCLPERLPAITRFADFTILNDDYYDIAKRDEIEKVNSDIQNALQDASVPGSKTQSSAGSDKDFKPKQMQAALVLELIMLDQQLAMDIMSSYSQGLDVATFAPDNLRTLDEYLPVRKVNSGLDVTAEMVCFGMGLRISPSDKAKLRPVVDLANFAITVVNDLYSWPKEIKCHLETPGSELPFNAVAVLMRHGGYSEPEAFRILYAKQAELEGEHLRQLDALRAQEGGRLPENQELYVENAQRAVCGSELWSVYTRRYPSKADLRQPEVEFVDGAFRYVADGEGAGEEKVVSESVESLPTTEVEDEFSSSDASPGSVDQAISTPPSTTFCSCEDEEEHIADVKEVCEDEADGVRDMSDISQKSKKKIDTLLPEGPGLTTYASRLEAAPDHAVIAPIKYLATLPSKGVRDTFIDALNWWLEVPEDSLRTIKTIISMLHDSSLILDDIEDDSTLRRGSPAAHMIFGTAQCINAANHIFVMVLAELQKLRSPLKTAILIATEELESLFVGQADDLHWKYHVDCPSTEDYMEMIDNKTGGLFRLCVRLLQAESTRTDVLDLDPRPFVRQLSLFFQIRDDYQNLVSDAYAKQKGFAEDLDEGKISLPIILTLQRARTRPEIMGVLKHKQPGPMAIEMKQYIVREMEKCGALESTRELLQGMQEDLIAELRRLEGDFGAKNATLELVLRRLWIS.

The segment at 14-335 (ASSGLRSKFR…YTRRYPSKAD (322 aa)) is terpene cyclase. Asp95 is a binding site for Mg(2+). The DDXXD 1 motif lies at 95 to 99 (DDYYD). The NSE/DTE signature appears at 233-241 (NDLYSWPKE). The segment at 336 to 759 (LRQPEVEFVD…LELVLRRLWI (424 aa)) is prenyltransferase. The interval 359–400 (EEKVVSESVESLPTTEVEDEFSSSDASPGSVDQAISTPPSTT) is disordered. Positions 391-400 (QAISTPPSTT) are enriched in polar residues. Isopentenyl diphosphate contacts are provided by Lys477, Arg480, and His509. Asp516 and Asp520 together coordinate Mg(2+). Positions 516 to 520 (DDIED) match the DDXXD 2 motif. Arg525 is a dimethylallyl diphosphate binding site. Isopentenyl diphosphate is bound at residue Arg526. 6 residues coordinate dimethylallyl diphosphate: Lys605, Thr606, Gln643, Asn650, Lys660, and Lys670.

This sequence in the N-terminal section; belongs to the terpene synthase family. It in the C-terminal section; belongs to the FPP/GGPP synthase family. As to quaternary structure, hexamer. Mg(2+) is required as a cofactor.

The enzyme catalyses 5 isopentenyl diphosphate + dimethylallyl diphosphate = all-trans-hexaprenyl diphosphate + 5 diphosphate. It catalyses the reaction all-trans-hexaprenyl diphosphate + H2O = colleterpenol + diphosphate. Its function is as follows. Bifunctional terpene synthase that converts dimethylallyl diphosphate (DMAPP) and isopentenyl diphosphate (IPP) into colleterpenol as a single product. The C-terminal prenyltransferase (PT) domain of CgCS catalyzes formation of hexaprenyl diphosphate (HexPP), whereas the N-terminal terpene cyclase (TC) domain catalyzes the cyclization of HexPP to colleterpenol. This Colletotrichum gloeosporioides (Anthracnose fungus) protein is Colleterpenol synthase.